Reading from the N-terminus, the 330-residue chain is Glycerol-3-phosphate dehydrogenase [NAD(P)+] (330 aa).

NADPH-binding residues include Ser-10, Trp-11, Arg-31, and Lys-105. Residues Lys-105, Gly-135, and Ser-137 each contribute to the sn-glycerol 3-phosphate site. Position 139 (Ala-139) interacts with NADPH. Residues Lys-190, Asp-243, Ser-253, Arg-254, and Asn-255 each contribute to the sn-glycerol 3-phosphate site. The Proton acceptor role is filled by Lys-190. Arg-254 contributes to the NADPH binding site. Residues Val-278 and Glu-280 each coordinate NADPH.

The protein belongs to the NAD-dependent glycerol-3-phosphate dehydrogenase family.

It is found in the cytoplasm. It catalyses the reaction sn-glycerol 3-phosphate + NAD(+) = dihydroxyacetone phosphate + NADH + H(+). It carries out the reaction sn-glycerol 3-phosphate + NADP(+) = dihydroxyacetone phosphate + NADPH + H(+). It functions in the pathway membrane lipid metabolism; glycerophospholipid metabolism. Functionally, catalyzes the reduction of the glycolytic intermediate dihydroxyacetone phosphate (DHAP) to sn-glycerol 3-phosphate (G3P), the key precursor for phospholipid synthesis. The chain is Glycerol-3-phosphate dehydrogenase [NAD(P)+] from Solidesulfovibrio magneticus (strain ATCC 700980 / DSM 13731 / RS-1) (Desulfovibrio magneticus).